The chain runs to 94 residues: MSEQTSAASTTDRGDRKTRRGYVVSDKMQKTVVVEVEDRVKHPLYAKVIRRTTKVKAHDEVETAGVGDLVLIAETRPLSATKRWRVVEVLERAK.

The segment at 1-22 is disordered; sequence MSEQTSAASTTDRGDRKTRRGY.

The protein belongs to the universal ribosomal protein uS17 family. As to quaternary structure, part of the 30S ribosomal subunit.

In terms of biological role, one of the primary rRNA binding proteins, it binds specifically to the 5'-end of 16S ribosomal RNA. The protein is Small ribosomal subunit protein uS17 of Kineococcus radiotolerans (strain ATCC BAA-149 / DSM 14245 / SRS30216).